Consider the following 337-residue polypeptide: MKRIAVLTSGGDAPGMNAAIRAVVRKAISEGMEVYGINRGYAGMVDGDIFPLGSKEVGDKISRGGTFLYSARYPEFAQLEGQLAGIEQLKKHGIEGVVVIGGDGSYHGAMRLTEHGFPAVGIPGTIDNDIAGTDYTIGFDTAVNTAVEAIDKLRDTSSSHGRTFVVEVMGRNAGDIALWAGIASGADQIIVPEEEFDIEKVASTIQYDFEHKGKNHHIIVLAEGVMSGEAFAQKLKEAGDKSDLRVTNLGHILRGGSPTARDRVIASWMGSHAVELLKEGKGGLAVGIHNEELVESPILGTAEEGALFSLTEEGQIIVNNPHKARLDFAALNRSLSQ.

Gly-11 contributes to the ATP binding site. 21 to 25 contributes to the ADP binding site; that stretch reads RAVVR. ATP contacts are provided by residues 72–73 and 102–105; these read RY and GDGS. Residue Asp-103 participates in Mg(2+) binding. 125-127 lines the substrate pocket; it reads TID. Catalysis depends on Asp-127, which acts as the Proton acceptor. Residue Arg-154 coordinates ADP. Substrate contacts are provided by residues Arg-162 and 169–171; that span reads MGR. ADP is bound by residues 185–187, Lys-212, and 214–216; these read GAD and KNH. Substrate-binding positions include Glu-223, Arg-245, and 251–254; that span reads HILR.

The protein belongs to the phosphofructokinase type A (PFKA) family. ATP-dependent PFK group I subfamily. Prokaryotic clade 'B1' sub-subfamily. As to quaternary structure, homotetramer. Mg(2+) serves as cofactor.

It is found in the cytoplasm. It carries out the reaction beta-D-fructose 6-phosphate + ATP = beta-D-fructose 1,6-bisphosphate + ADP + H(+). Its pathway is carbohydrate degradation; glycolysis; D-glyceraldehyde 3-phosphate and glycerone phosphate from D-glucose: step 3/4. With respect to regulation, allosterically activated by ADP and other diphosphonucleosides, and allosterically inhibited by phosphoenolpyruvate. Catalyzes the phosphorylation of D-fructose 6-phosphate to fructose 1,6-bisphosphate by ATP, the first committing step of glycolysis. This chain is ATP-dependent 6-phosphofructokinase, found in Streptococcus pyogenes serotype M3 (strain SSI-1).